A 457-amino-acid chain; its full sequence is Na(+)/H(+) antiporter NhaA (457 aa).

The next 11 helical transmembrane spans lie at 33–53 (ASGIVLLSCAVAALALANSPL), 76–96 (FSLAMLVNDGLMTIFFFVVGM), 114–134 (LLPLVAALGGMAVPAAIFLAF), 142–162 (AGWGVPMATDIAFCVGVLTLL), 172–192 (VFVTALAIFDDIGGILVIALF), 196–216 (GLQLTWLAAAGGLTAALALMS), 235–255 (YALHHGGIHATIAGVIAGLAI), 308–328 (FVHALHPWVAFAIMPVFALAN), 349–369 (TALALFAGKLVGIFCCTWIAV), 385–405 (LIGVSAVAGIGFTVALFIAGL), and 419–439 (VGILAGSLVSGVVGALVLRLT).

The protein belongs to the NhaA Na(+)/H(+) (TC 2.A.33) antiporter family.

Its subcellular location is the cell inner membrane. The enzyme catalyses Na(+)(in) + 2 H(+)(out) = Na(+)(out) + 2 H(+)(in). In terms of biological role, na(+)/H(+) antiporter that extrudes sodium in exchange for external protons. The chain is Na(+)/H(+) antiporter NhaA from Anaeromyxobacter sp. (strain Fw109-5).